A 491-amino-acid chain; its full sequence is Trypanothione reductase (491 aa).

35–52 (DVQATHGPPALVALGGTC) lines the FAD pocket. Cys-52 and Cys-57 form a disulfide bridge. Catalysis depends on His-461, which acts as the Proton acceptor.

The protein belongs to the class-I pyridine nucleotide-disulfide oxidoreductase family. In terms of assembly, homodimer. FAD is required as a cofactor.

It is found in the cytoplasm. The enzyme catalyses trypanothione + NADP(+) = trypanothione disulfide + NADPH + H(+). Trypanothione is the parasite analog of glutathione; this enzyme is the equivalent of glutathione reductase. In Leishmania donovani, this protein is Trypanothione reductase (TPR).